The primary structure comprises 292 residues: Homoserine kinase (292 aa).

An ATP-binding site is contributed by 81-91 (RPRSGLGSSGA).

Belongs to the GHMP kinase family. Homoserine kinase subfamily.

Its subcellular location is the cytoplasm. The enzyme catalyses L-homoserine + ATP = O-phospho-L-homoserine + ADP + H(+). Its pathway is amino-acid biosynthesis; L-threonine biosynthesis; L-threonine from L-aspartate: step 4/5. In terms of biological role, catalyzes the ATP-dependent phosphorylation of L-homoserine to L-homoserine phosphate. This Thermococcus kodakarensis (strain ATCC BAA-918 / JCM 12380 / KOD1) (Pyrococcus kodakaraensis (strain KOD1)) protein is Homoserine kinase.